The following is a 414-amino-acid chain: Thyroid hormone receptor beta-B (414 aa).

The interval 1-59 (MPSSMSVRLFTASAAQRKKIQEGDCCVVLAGKTQGRFILIGAVARVSGYIPSYLDKDEL) is modulating. NR C4-type zinc fingers lie at residues 60 to 80 (CVVCGDKATGYHYRCITCEGC) and 98 to 122 (CKYEGKCVIDKVTRNQCQECRFKKC). Residues 60-134 (CVVCGDKATG…VGMATDLVLD (75 aa)) constitute a DNA-binding region (nuclear receptor). The NR LBD domain occupies 170 to 414 (EEWELIQVVT…PPLFLEVFED (245 aa)).

The protein belongs to the nuclear hormone receptor family. NR1 subfamily.

Its subcellular location is the nucleus. High affinity receptor for triiodothyronine (T3). The protein is Thyroid hormone receptor beta-B (thrb-b) of Xenopus laevis (African clawed frog).